Reading from the N-terminus, the 624-residue chain is Probable potassium transport system protein Kup 1 (624 aa).

A run of 12 helical transmembrane segments spans residues 10 to 30 (LALG…LYAL), 48 to 68 (LSLI…MIIF), 94 to 114 (PLFY…GMLT), 133 to 153 (LYPY…SLQA), 159 to 179 (IGYL…ILGI), 210 to 230 (LLLG…ADIG), 242 to 262 (FFAA…NLIV), 270 to 290 (PFFM…ATVA), 331 to 351 (IYVP…CLAF), 363 to 383 (IAVN…AISI), 388 to 408 (IFNV…FLGA), and 413 to 433 (FITG…IMYS).

This sequence belongs to the HAK/KUP transporter (TC 2.A.72) family.

The protein resides in the cell inner membrane. The catalysed reaction is K(+)(in) + H(+)(in) = K(+)(out) + H(+)(out). Its function is as follows. Transport of potassium into the cell. Likely operates as a K(+):H(+) symporter. This is Probable potassium transport system protein Kup 1 from Legionella pneumophila (strain Lens).